The primary structure comprises 389 residues: MILDYDVILARYGEVAIKGPSVRRRFEGKLLHNIKSAFSCRAELRHGRIFIFPEDMDEALDRLSKIFGIVSFSPAVTAETGFDSIEDSLREYIHELRSEGLLTSRTPFAIRCRRVGEHDFTSQEMAAFAGSVVVGEIGAPVDLGNPDLEIHLEIREDETYIYHRVIPGPGGLPAGTQGKVVALLSGGIDSPVATYLMMKRGCQVVAVHMDNAPFTGEEAEEKVEKIAAKLAEYSAGVEFKLRTFSYGRYLESCRRGAPEKMTCVLCKFGMYHLAEMVAEEEGALAIVDGSSLGQVASQTLPNILATRMGVNIPILSPLIGMDKVEIENLAKRIGTYDISVIPDGGCSAVPAHPSTASPPEAVMEASEKINVKEEVAEIFRKGSKTRIFS.

The region spanning Asp-57–Val-165 is the THUMP domain. ATP-binding positions include Leu-183–Leu-184, Lys-267, Gly-289, and Gln-298.

It belongs to the ThiI family.

Its subcellular location is the cytoplasm. It catalyses the reaction [ThiI sulfur-carrier protein]-S-sulfanyl-L-cysteine + a uridine in tRNA + 2 reduced [2Fe-2S]-[ferredoxin] + ATP + H(+) = [ThiI sulfur-carrier protein]-L-cysteine + a 4-thiouridine in tRNA + 2 oxidized [2Fe-2S]-[ferredoxin] + AMP + diphosphate. The enzyme catalyses [ThiS sulfur-carrier protein]-C-terminal Gly-Gly-AMP + S-sulfanyl-L-cysteinyl-[cysteine desulfurase] + AH2 = [ThiS sulfur-carrier protein]-C-terminal-Gly-aminoethanethioate + L-cysteinyl-[cysteine desulfurase] + A + AMP + 2 H(+). Its pathway is cofactor biosynthesis; thiamine diphosphate biosynthesis. Its function is as follows. Catalyzes the ATP-dependent transfer of a sulfur to tRNA to produce 4-thiouridine in position 8 of tRNAs, which functions as a near-UV photosensor. Also catalyzes the transfer of sulfur to the sulfur carrier protein ThiS, forming ThiS-thiocarboxylate. This is a step in the synthesis of thiazole, in the thiamine biosynthesis pathway. The sulfur is donated as persulfide by IscS. This Methanothermobacter thermautotrophicus (strain ATCC 29096 / DSM 1053 / JCM 10044 / NBRC 100330 / Delta H) (Methanobacterium thermoautotrophicum) protein is Probable tRNA sulfurtransferase.